Reading from the N-terminus, the 323-residue chain is Small ribosomal subunit protein uS9m (323 aa).

The segment at Thr298–Arg323 is disordered. The segment covering Val304 to Arg323 has biased composition (basic residues).

The protein belongs to the universal ribosomal protein uS9 family.

It localises to the mitochondrion. This Debaryomyces hansenii (strain ATCC 36239 / CBS 767 / BCRC 21394 / JCM 1990 / NBRC 0083 / IGC 2968) (Yeast) protein is Small ribosomal subunit protein uS9m (MRPS9).